The primary structure comprises 83 residues: ATP synthase subunit c, chloroplastic (83 aa).

The next 2 membrane-spanning stretches (helical) occupy residues 3–23 (PIIS…AAIG) and 57–77 (LAFM…LLFA).

Belongs to the ATPase C chain family. F-type ATPases have 2 components, F(1) - the catalytic core - and F(0) - the membrane proton channel. F(1) has five subunits: alpha(3), beta(3), gamma(1), delta(1), epsilon(1). F(0) has four main subunits: a(1), b(1), b'(1) and c(10-14). The alpha and beta chains form an alternating ring which encloses part of the gamma chain. F(1) is attached to F(0) by a central stalk formed by the gamma and epsilon chains, while a peripheral stalk is formed by the delta, b and b' chains.

The protein localises to the plastid. It localises to the chloroplast thylakoid membrane. In terms of biological role, f(1)F(0) ATP synthase produces ATP from ADP in the presence of a proton or sodium gradient. F-type ATPases consist of two structural domains, F(1) containing the extramembraneous catalytic core and F(0) containing the membrane proton channel, linked together by a central stalk and a peripheral stalk. During catalysis, ATP synthesis in the catalytic domain of F(1) is coupled via a rotary mechanism of the central stalk subunits to proton translocation. Key component of the F(0) channel; it plays a direct role in translocation across the membrane. A homomeric c-ring of between 10-14 subunits forms the central stalk rotor element with the F(1) delta and epsilon subunits. The protein is ATP synthase subunit c, chloroplastic of Diacronema lutheri (Unicellular marine alga).